Here is a 100-residue protein sequence, read N- to C-terminus: Apolipoprotein C-II (100 aa).

An N-terminal signal peptide occupies residues 1–22; sequence MSSQFLLAFFLVLLVLGYEVQG. The lipid binding stretch occupies residues 66–74; that stretch reads SVDEKLRDM. The lipoprotein lipase cofactor stretch occupies residues 78 to 100; sequence SSAAMSTYAGIFTDQLFTLLKGE.

Belongs to the apolipoprotein C2 family. Proapolipoprotein C-II is synthesized as a sialic acid containing glycoprotein which is subsequently desialylated prior to its proteolytic processing. Post-translationally, proapolipoprotein C-II, the major form found in plasma undergoes proteolytic cleavage of its N-terminal hexapeptide to generate the mature form apolipoprotein C-II, which occurs as the minor form in plasma.

The protein resides in the secreted. In terms of biological role, component of chylomicrons, very low-density lipoproteins (VLDL), low-density lipoproteins (LDL), and high-density lipoproteins (HDL) in plasma. Plays an important role in lipoprotein metabolism as an activator of lipoprotein lipase. This chain is Apolipoprotein C-II (APOC2), found in Cricetulus griseus (Chinese hamster).